The following is a 154-amino-acid chain: L-alanine exporter AlaE (154 aa).

The next 4 membrane-spanning stretches (helical) occupy residues 21–41, 51–71, 90–110, and 115–135; these read FAMVVYCTVVNMLIEIFLSGM, LVAIPVNILIACPYGIYRDFF, ILAYVTFQSPVYAAILWVIGA, and IVAAVSSNMVISMMMGAVYGY.

It belongs to the AlaE exporter family.

Its subcellular location is the cell inner membrane. Its function is as follows. Exports L-alanine. The sequence is that of L-alanine exporter AlaE from Escherichia fergusonii (strain ATCC 35469 / DSM 13698 / CCUG 18766 / IAM 14443 / JCM 21226 / LMG 7866 / NBRC 102419 / NCTC 12128 / CDC 0568-73).